Reading from the N-terminus, the 276-residue chain is MDNARRKTPARLDAACFWQIWQRFDKEEKGYIRETELDAFFDHLLAKSGTEDTLMEENVQKVKEQLMTSHNVSKEGRILMKELASMFLSEDENFLLFFRLETPLDNSVEFMQIWRKYDADSSGFISAAELCNFLRDLFLHHKKNISEAELEEYTSTMMKIFDKNKDGRLDLNDLARILALQENFLLQFKMDASSTEERKRDFEKIFAHYDVSKTGALEGPEVDGFVKDMMELVQPSISGVDLDKFREILLRHCDVNKDGKIQKSELALCLGLKINP.

6 consecutive EF-hand domains span residues 12-47, 58-93, 105-140, 149-184, 197-232, and 240-276; these read LDAACFWQIWQRFDKEEKGYIRETELDAFFDHLLAK, NVQKVKEQLMTSHNVSKEGRILMKELASMFLSEDEN, DNSVEFMQIWRKYDADSSGFISAAELCNFLRDLFLH, ELEEYTSTMMKIFDKNKDGRLDLNDLARILALQENF, ERKRDFEKIFAHYDVSKTGALEGPEVDGFVKDMMEL, and VDLDKFREILLRHCDVNKDGKIQKSELALCLGLKINP. Ca(2+)-binding residues include Asp25, Tyr31, Glu36, Ser73, Glu75, Arg77, Glu82, Asp118, Asp120, Ser122, Glu129, Asp162, Asn164, Asp166, Arg168, Asp173, Asp210, Ser212, Thr214, Glu221, Asp254, Asn256, Asp258, Lys260, and Glu265.

It localises to the cytoplasm. The protein resides in the secreted. Its subcellular location is the cytoplasmic vesicle. The protein localises to the secretory vesicle membrane. This is Secretagogin (Scgn) from Mus musculus (Mouse).